A 451-amino-acid chain; its full sequence is Macrophage scavenger receptor types I and II (451 aa).

Residues 1 to 50 (MEQWDHFHNQQEDTDSCSESVKFDARSMTALLPPNPKNSPSLQEKLKSFK) lie on the Cytoplasmic side of the membrane. At S27 the chain carries Phosphoserine. A helical; Signal-anchor for type II membrane protein transmembrane segment spans residues 51 to 76 (AALIALYLLVFAVLIPLIGIVAAQLL). A spacer region spans residues 77–109 (KWETKNCSVSSTNANDITQSLTGKGNDSEEEMR). Residues 77-451 (KWETKNCSVS…SEDAGVTCTL (375 aa)) are Extracellular-facing. Residues N82, N102, N143, N184, N221, N249, and N267 are each glycosylated (N-linked (GlcNAc...) asparagine). Residues 171–255 (NAIDEISKSL…VLNNITNDLR (85 aa)) adopt a coiled-coil conformation. Residues 267–346 (NITLIQGPPG…EKGSGNTLTP (80 aa)) form a disordered region. The region spanning 273–341 (GPPGPPGEKG…KGQKGEKGSG (69 aa)) is the Collagen-like domain. One can recognise an SRCR domain in the interval 350–450 (VRLVGGSGPH…HSEDAGVTCT (101 aa)). Disulfide bonds link C375-C439, C388-C449, and C419-C429.

In terms of assembly, homotrimer. Interacts with MYO18A. Isoform I, isoform II and isoform III are expressed in monocyte-derived macrophages. Isoform I and isoform II are expressed in the liver, placenta and brain.

It localises to the membrane. Its function is as follows. Membrane glycoproteins implicated in the pathologic deposition of cholesterol in arterial walls during atherogenesis. Two types of receptor subunits exist. These receptors mediate the endocytosis of a diverse group of macromolecules, including modified low density lipoproteins (LDL). Isoform III does not internalize acetylated LDL. This is Macrophage scavenger receptor types I and II (MSR1) from Homo sapiens (Human).